Consider the following 270-residue polypeptide: Glucosamine-6-phosphate deaminase (270 aa).

D72 functions as the Proton acceptor; for enolization step in the catalytic mechanism. D141 functions as the For ring-opening step in the catalytic mechanism. H143 (proton acceptor; for ring-opening step) is an active-site residue. E148 functions as the For ring-opening step in the catalytic mechanism.

This sequence belongs to the glucosamine/galactosamine-6-phosphate isomerase family. NagB subfamily.

It carries out the reaction alpha-D-glucosamine 6-phosphate + H2O = beta-D-fructose 6-phosphate + NH4(+). Its pathway is amino-sugar metabolism; N-acetylneuraminate degradation; D-fructose 6-phosphate from N-acetylneuraminate: step 5/5. Allosterically activated by N-acetylglucosamine 6-phosphate (GlcNAc6P). In terms of biological role, catalyzes the reversible isomerization-deamination of glucosamine 6-phosphate (GlcN6P) to form fructose 6-phosphate (Fru6P) and ammonium ion. This chain is Glucosamine-6-phosphate deaminase, found in Bacteroides fragilis (strain ATCC 25285 / DSM 2151 / CCUG 4856 / JCM 11019 / LMG 10263 / NCTC 9343 / Onslow / VPI 2553 / EN-2).